The sequence spans 185 residues: Urease accessory protein UreE (185 aa).

The disordered stretch occupies residues 153 to 185; that stretch reads LRANSAQGHGHSHSHSHDHHGYHHHGDGNWHKH. Basic residues predominate over residues 162 to 175; that stretch reads GHSHSHSHDHHGYH. Residues 176-185 are compositionally biased toward basic and acidic residues; it reads HHGDGNWHKH.

The protein belongs to the UreE family.

Its subcellular location is the cytoplasm. In terms of biological role, involved in urease metallocenter assembly. Binds nickel. Probably functions as a nickel donor during metallocenter assembly. The polypeptide is Urease accessory protein UreE (Haemophilus influenzae (strain PittGG)).